A 225-amino-acid chain; its full sequence is Small ribosomal subunit protein uS3 (225 aa).

A KH type-2 domain is found at 38–106; the sequence is IRKFIQSRFS…PVNLNIIEVK (69 aa).

It belongs to the universal ribosomal protein uS3 family. In terms of assembly, part of the 30S ribosomal subunit. Forms a tight complex with proteins S10 and S14.

Functionally, binds the lower part of the 30S subunit head. Binds mRNA in the 70S ribosome, positioning it for translation. This chain is Small ribosomal subunit protein uS3, found in Leptospira borgpetersenii serovar Hardjo-bovis (strain JB197).